A 647-amino-acid chain; its full sequence is DNA polymerase subunit gamma-1 (647 aa).

The disordered stretch occupies residues 116-147 (ERPGRAEQSQMQDEDGLPELVEESSQPSFHHG). The segment covering 127-137 (QDEDGLPELVE) has biased composition (acidic residues).

The protein belongs to the DNA polymerase type-A family. In terms of assembly, heterotrimer composed of a catalytic subunit and a homodimer of accessory subunits. Interacts with TTC3. Mg(2+) serves as cofactor.

It localises to the mitochondrion. The protein localises to the mitochondrion matrix. Its subcellular location is the mitochondrion nucleoid. The enzyme catalyses DNA(n) + a 2'-deoxyribonucleoside 5'-triphosphate = DNA(n+1) + diphosphate. Functionally, involved in the replication of mitochondrial DNA. Associates with mitochondrial DNA. The protein is DNA polymerase subunit gamma-1 (POLG) of Gallus gallus (Chicken).